The chain runs to 315 residues: Porphobilinogen deaminase (315 aa).

At Cys-234 the chain carries S-(dipyrrolylmethanemethyl)cysteine.

The protein belongs to the HMBS family. As to quaternary structure, monomer. It depends on dipyrromethane as a cofactor.

The catalysed reaction is 4 porphobilinogen + H2O = hydroxymethylbilane + 4 NH4(+). Its pathway is porphyrin-containing compound metabolism; protoporphyrin-IX biosynthesis; coproporphyrinogen-III from 5-aminolevulinate: step 2/4. Tetrapolymerization of the monopyrrole PBG into the hydroxymethylbilane pre-uroporphyrinogen in several discrete steps. This is Porphobilinogen deaminase (hemC) from Mycobacterium leprae (strain TN).